We begin with the raw amino-acid sequence, 86 residues long: Putative defensin-like protein 9 (86 aa).

The N-terminal stretch at 1-29 (MKSSMQLISTLFFLVILVVAPGMKMVVEG) is a signal peptide. Residue Gln30 is modified to Pyrrolidone carboxylic acid. 4 disulfides stabilise this stretch: Cys34–Cys79, Cys45–Cys65, Cys51–Cys73, and Cys55–Cys75.

This sequence belongs to the DEFL family.

It is found in the secreted. The protein is Putative defensin-like protein 9 (LCR76) of Arabidopsis thaliana (Mouse-ear cress).